Here is a 292-residue protein sequence, read N- to C-terminus: MTEFDLSTREGRWKHFGSVDPVKGTKPTTKNEMTDLQSTHKNFLFEIEEVGIKNLTYPVLIDQYQTAGLFSFSTSLNKNEKGINMSRILESVEKHYDNGIELEFNTLHQLLRTLQDKMNQNAAGVDVSGKWFFDRYSPVTHIKAVGHADVTYGLAIENHTVTRKELTIQAKVTTLCPCSKEISEYSAHNQRGIVTVKAYLDKNNDVIDDYKNKILDAMEANASSILYPILKRPDEKRVTERAYENPRFVEDLIRLIAADLVEFDWIEGFDIECRNEESIHQHDAFARLKYRK.

This sequence belongs to the GTP cyclohydrolase IV family.

The catalysed reaction is GTP + H2O = 7,8-dihydroneopterin 3'-triphosphate + formate + H(+). It functions in the pathway cofactor biosynthesis; 7,8-dihydroneopterin triphosphate biosynthesis; 7,8-dihydroneopterin triphosphate from GTP: step 1/1. Its function is as follows. Converts GTP to 7,8-dihydroneopterin triphosphate. In Staphylococcus epidermidis (strain ATCC 35984 / DSM 28319 / BCRC 17069 / CCUG 31568 / BM 3577 / RP62A), this protein is GTP cyclohydrolase FolE2.